Here is a 369-residue protein sequence, read N- to C-terminus: DNA polymerase IV 2 (369 aa).

A UmuC domain is found at 17 to 201 (VFHVDMDSFF…LPVSRIPGVG (185 aa)). Mg(2+) is bound by residues aspartate 21 and aspartate 119. The active site involves glutamate 120.

Belongs to the DNA polymerase type-Y family. Monomer. Mg(2+) serves as cofactor.

It is found in the cytoplasm. It carries out the reaction DNA(n) + a 2'-deoxyribonucleoside 5'-triphosphate = DNA(n+1) + diphosphate. Functionally, poorly processive, error-prone DNA polymerase involved in untargeted mutagenesis. Copies undamaged DNA at stalled replication forks, which arise in vivo from mismatched or misaligned primer ends. These misaligned primers can be extended by PolIV. Exhibits no 3'-5' exonuclease (proofreading) activity. May be involved in translesional synthesis. The polypeptide is DNA polymerase IV 2 (dbh2) (Methanosarcina mazei (strain ATCC BAA-159 / DSM 3647 / Goe1 / Go1 / JCM 11833 / OCM 88) (Methanosarcina frisia)).